Consider the following 187-residue polypeptide: Adenine phosphoribosyltransferase (187 aa).

The protein belongs to the purine/pyrimidine phosphoribosyltransferase family. Homodimer.

The protein resides in the cytoplasm. It carries out the reaction AMP + diphosphate = 5-phospho-alpha-D-ribose 1-diphosphate + adenine. It functions in the pathway purine metabolism; AMP biosynthesis via salvage pathway; AMP from adenine: step 1/1. In terms of biological role, catalyzes a salvage reaction resulting in the formation of AMP, that is energically less costly than de novo synthesis. This is Adenine phosphoribosyltransferase from Burkholderia pseudomallei (strain 668).